The chain runs to 558 residues: Serine palmitoyltransferase 2 (558 aa).

A compositionally biased stretch (acidic residues) spans 33 to 42 (HDDDEEEEEV). Positions 33 to 57 (HDDDEEEEEVKVDQGSEETTSSHDI) are disordered. N6-(pyridoxal phosphate)lysine is present on K384.

This sequence belongs to the class-II pyridoxal-phosphate-dependent aminotransferase family. In terms of assembly, heterodimer of sptl-1/sptl-2. It depends on pyridoxal 5'-phosphate as a cofactor.

The catalysed reaction is L-serine + hexadecanoyl-CoA + H(+) = 3-oxosphinganine + CO2 + CoA. The protein operates within lipid metabolism; sphingolipid metabolism. Its function is as follows. Component of the serine palmitoyltransferase (SPT) that catalyzes the first committed step in sphingolipid biosynthesis, which is the condensation of an acyl-CoA species and L-serine. The catalytic core is composed of a heterodimer of sptl-1 and sptl-2 or sptl-1 and sptl-3. Required for the specification of abicobasal polarity and development of the gut lumen. The protein is Serine palmitoyltransferase 2 (sptl-2) of Caenorhabditis elegans.